A 196-amino-acid chain; its full sequence is uncharacterized protein (196 aa).

One can recognise a Macro domain in the interval 1-183 (MREFHYGVHM…RFLFILSDLG (183 aa)).

It belongs to the MacroD-type family.

This is an uncharacterized protein from Thermoplasma acidophilum (strain ATCC 25905 / DSM 1728 / JCM 9062 / NBRC 15155 / AMRC-C165).